The primary structure comprises 115 residues: Meromycolate extension acyl carrier protein (115 aa).

Residues 3–81 (VTQEEIIAGI…DVVTYIQKLE (79 aa)) form the Carrier domain. The residue at position 41 (S41) is an O-(pantetheine 4'-phosphoryl)serine.

Belongs to the acyl carrier protein (ACP) family. 4'-phosphopantetheine is transferred from CoA to a specific serine of apo-AcpM.

It is found in the cytoplasm. Acyl carrier protein involved in meromycolate extension. In Mycobacterium leprae (strain TN), this protein is Meromycolate extension acyl carrier protein (acpM).